Consider the following 135-residue polypeptide: Interleukin-4 (135 aa).

An N-terminal signal peptide occupies residues 1–24; the sequence is MGLTSQLIPALVCLLVCTSHFVHG. 2 disulfides stabilise this stretch: cysteine 48/cysteine 85 and cysteine 70/cysteine 105. Residues asparagine 62 and asparagine 96 are each glycosylated (N-linked (GlcNAc...) asparagine).

The protein belongs to the IL-4/IL-13 family.

Its subcellular location is the secreted. In terms of biological role, participates in at least several B-cell activation processes as well as of other cell types. It is a costimulator of DNA-synthesis. It induces the expression of class II MHC molecules on resting B-cells. It enhances both secretion and cell surface expression of IgE and IgG1. It also regulates the expression of the low affinity Fc receptor for IgE (CD23) on both lymphocytes and monocytes. Positively regulates IL31RA expression in macrophages. Stimulates autophagy in dendritic cells by interfering with mTORC1 signaling and through the induction of RUFY4. This is Interleukin-4 (IL4) from Ovis aries (Sheep).